The following is a 449-amino-acid chain: Exodeoxyribonuclease 7 large subunit (449 aa).

This sequence belongs to the XseA family. As to quaternary structure, heterooligomer composed of large and small subunits.

The protein resides in the cytoplasm. It catalyses the reaction Exonucleolytic cleavage in either 5'- to 3'- or 3'- to 5'-direction to yield nucleoside 5'-phosphates.. Bidirectionally degrades single-stranded DNA into large acid-insoluble oligonucleotides, which are then degraded further into small acid-soluble oligonucleotides. The chain is Exodeoxyribonuclease 7 large subunit from Salmonella heidelberg (strain SL476).